Consider the following 1534-residue polypeptide: Activating signal cointegrator 1 complex subunit 3 (1534 aa).

One can recognise a Helicase ATP-binding 1 domain in the interval 83 to 267 (ETAYNTNENL…FLHVNPFIGL (185 aa)). 96 to 103 (APTGAGKT) contributes to the ATP binding site. The DEVH box motif lies at 209–212 (DEVH). A Helicase C-terminal 1 domain is found at 294–500 (QLHDMEEVCY…SLADNLNAEI (207 aa)). Positions 576-849 (STDLGRTASH…GSEAVCIINF (274 aa)) constitute an SEC63 1 domain. A Helicase ATP-binding 2 domain is found at 898–1073 (HTLYHTDTNV…WLGIGQVGLF (176 aa)). 911-918 (APTGSGKT) contacts ATP. Residues 1015–1018 (DEIH) carry the DEIH box motif. The Helicase C-terminal 2 domain maps to 1106–1313 (PVFQAIRTHS…GTVTSKQDAM (208 aa)). The SEC63 2 domain maps to 1374 to 1481 (PLTYGRISSY…TLPHIQKQEL (108 aa)).

This sequence belongs to the helicase family.

It localises to the nucleus. The protein localises to the nucleus speckle. It is found in the cytoplasm. Its subcellular location is the cytosol. The enzyme catalyses Couples ATP hydrolysis with the unwinding of duplex DNA by translocating in the 3'-5' direction.. The catalysed reaction is ATP + H2O = ADP + phosphate + H(+). Functionally, 3'-5' DNA helicase involved in repair of alkylated DNA. Promotes DNA unwinding to generate single-stranded substrate needed for alkbh3, enabling alkbh3 to process alkylated N3-methylcytosine (3mC) within double-stranded regions. Also involved in activation of the ribosome quality control (RQC) pathway, a pathway that degrades nascent peptide chains during problematic translation. Drives the splitting of stalled ribosomes. The chain is Activating signal cointegrator 1 complex subunit 3 (ascc3) from Danio rerio (Zebrafish).